The sequence spans 260 residues: uncharacterized protein (260 aa).

Residues 1–22 form the signal peptide; sequence MGNIKSFALYISILLLIVVVAG. A lipid anchor (N-palmitoyl cysteine) is attached at Cys23. Cys23 carries the S-diacylglycerol cysteine lipid modification.

Belongs to the staphylococcal tandem lipoprotein family.

The protein localises to the cell membrane. This is an uncharacterized protein from Staphylococcus aureus (strain MRSA252).